A 311-amino-acid polypeptide reads, in one-letter code: MEKEFVFGHQNPDTDAIGTAIAFSYLQNKLGYNTEAVALGEPNDETAYALKKFGFEAPRVIKKAAPEVNAVMLVDHNEPQQSVSDIDKVKVTHVVDHHRIMNFNTADPLYYRAEPMGCTSTIVWKMFNENGIEIPEKLAGLMLSAIISDTLLLKSPTTTDDDKKAVEALAKIANVDYKEYGLAMLKAGTNISDKSEEELIDLDAKSFALNGHNVRVAQINVVDLPEALERKDAFLKAMEASSNDNGYDMFMLLITNILDSDSEALVVGSDETKELFEKAFDKKLNDSEVKLPGVVSRKKQVVPPLTEAFEG.

Mn(2+) is bound by residues histidine 9, aspartate 13, aspartate 15, aspartate 75, histidine 97, and aspartate 149.

This sequence belongs to the PPase class C family. The cofactor is Mn(2+).

The protein localises to the cytoplasm. It carries out the reaction diphosphate + H2O = 2 phosphate + H(+). This Lactobacillus helveticus (strain DPC 4571) protein is Probable manganese-dependent inorganic pyrophosphatase.